Here is a 102-residue protein sequence, read N- to C-terminus: MSAVDKRFKSLGFNVGIPSLVFVRSLSRDCMLVVEGERVKGFAEYRYTFYKTRYLPDGRMTSLKVYMENQSIKRVLHRVASFLSFLERTKQIEQKECEKVAQ.

This is an uncharacterized protein from Bacillus subtilis (strain 168).